A 59-amino-acid chain; its full sequence is UPF0391 membrane protein lpg2521 (59 aa).

Helical transmembrane passes span 5-25 (ALIFFIIAIIAAAFGFGGIAV) and 30-50 (IAKILFFLFLVMFVIFLIMGL).

Belongs to the UPF0391 family.

It localises to the cell membrane. In Legionella pneumophila subsp. pneumophila (strain Philadelphia 1 / ATCC 33152 / DSM 7513), this protein is UPF0391 membrane protein lpg2521.